Consider the following 293-residue polypeptide: Protease HtpX (293 aa).

2 helical membrane passes run 4-24 (IALF…VLSL) and 34-54 (GLMI…LLMS). His139 lines the Zn(2+) pocket. Glu140 is an active-site residue. His143 is a binding site for Zn(2+). The next 2 helical transmembrane spans lie at 158-178 (IVNT…SGFL) and 193-213 (MVYF…ASII). Residue Glu222 participates in Zn(2+) binding.

The protein belongs to the peptidase M48B family. The cofactor is Zn(2+).

It localises to the cell inner membrane. In Pectobacterium atrosepticum (strain SCRI 1043 / ATCC BAA-672) (Erwinia carotovora subsp. atroseptica), this protein is Protease HtpX.